A 191-amino-acid chain; its full sequence is Guanylate kinase (191 aa).

One can recognise a Guanylate kinase-like domain in the interval 8 to 188 (GRLVVLAGPS…AVSDIKEILV (181 aa)). Position 15–22 (15–22 (GPSAVGKS)) interacts with ATP.

This sequence belongs to the guanylate kinase family.

The protein resides in the cytoplasm. The enzyme catalyses GMP + ATP = GDP + ADP. Functionally, essential for recycling GMP and indirectly, cGMP. The sequence is that of Guanylate kinase from Corynebacterium diphtheriae (strain ATCC 700971 / NCTC 13129 / Biotype gravis).